A 709-amino-acid chain; its full sequence is Methylmalonyl-CoA mutase (709 aa).

Substrate-binding positions include 73 to 77 (TIRQY), 183 to 185 (TIQ), R195, K222, H232, and 271 to 273 (RLS). One can recognise a B12-binding domain in the interval 579–709 (RPRMLVVKMG…ILDLIREARS (131 aa)). H592 is a binding site for adenosylcob(III)alamin.

This sequence belongs to the methylmalonyl-CoA mutase family. In terms of assembly, homodimer. Adenosylcob(III)alamin is required as a cofactor.

It catalyses the reaction (R)-methylmalonyl-CoA = succinyl-CoA. It participates in metabolic intermediate metabolism; propanoyl-CoA degradation; succinyl-CoA from propanoyl-CoA: step 3/3. Radical enzyme that catalyzes the transformation of (2R)-methylmalonyl-CoA to succinyl-CoA. Is involved in the ethylmalonyl-CoA pathway for acetyl-CoA assimilation required for R.sphaeroides growth on acetate as sole carbon source. This is Methylmalonyl-CoA mutase from Cereibacter sphaeroides (strain ATCC 17023 / DSM 158 / JCM 6121 / CCUG 31486 / LMG 2827 / NBRC 12203 / NCIMB 8253 / ATH 2.4.1.) (Rhodobacter sphaeroides).